The sequence spans 169 residues: Allophycocyanin subunit beta-18 (169 aa).

Position 72 is an N4-methylasparagine (N72). A (2R,3E)-phycocyanobilin-binding site is contributed by C82.

Belongs to the phycobiliprotein family. Heterodimer of ApcE and this beta chain. Post-translationally, contains one covalently linked bilin chromophore. The chromophore is added by phycocyanobilin lyase CpcUS.

The protein localises to the cellular thylakoid membrane. A variant beta-allophycocyanin (AP) which forms a complex with ApcE, a phycobilisome terminal emitter that influences energy transfer to photosystem II. The sequence is that of Allophycocyanin subunit beta-18 (apcF) from Picosynechococcus sp. (strain ATCC 27264 / PCC 7002 / PR-6) (Agmenellum quadruplicatum).